The following is a 393-amino-acid chain: NAD(P)H-quinone oxidoreductase subunit H, chloroplastic (393 aa).

Belongs to the complex I 49 kDa subunit family. As to quaternary structure, NDH is composed of at least 16 different subunits, 5 of which are encoded in the nucleus.

The protein resides in the plastid. It is found in the chloroplast thylakoid membrane. The catalysed reaction is a plastoquinone + NADH + (n+1) H(+)(in) = a plastoquinol + NAD(+) + n H(+)(out). The enzyme catalyses a plastoquinone + NADPH + (n+1) H(+)(in) = a plastoquinol + NADP(+) + n H(+)(out). Functionally, NDH shuttles electrons from NAD(P)H:plastoquinone, via FMN and iron-sulfur (Fe-S) centers, to quinones in the photosynthetic chain and possibly in a chloroplast respiratory chain. The immediate electron acceptor for the enzyme in this species is believed to be plastoquinone. Couples the redox reaction to proton translocation, and thus conserves the redox energy in a proton gradient. The polypeptide is NAD(P)H-quinone oxidoreductase subunit H, chloroplastic (Lobularia maritima (Sweet alyssum)).